The following is a 359-amino-acid chain: MAPFIPSSHTAIIQHDDAGGVKITPGLPLPVLEPGQVLVKTAAVALNPCDFKMPQRFSQAGTYNGCDYAGTVVQLTEEVEKNGLLKVGDRIFAACVGNNPHDKDSGSFAEYLKGTAKFCWKIPDWMSFEEAAGLSGTCIATACMSLFQSLKLPGTFEEPATKPLDVLIWGGASSVGTTMIQMVKLLGHRAITTCSPKNFELVKSYGADAVFDYRSPTCAADIKKLTRNSLKYVVDPFSDLRTMALADEAMGRSGGKYVALESYQDTHDKKSKLIERELIMGQMILGRAIKLPGDYGKPENPEMGRWGVECYKSVQRLVDDRKLRPHPLRILDGGLEAILDGLEMLKRREVAAEKIVVRL.

Position 49–52 (49–52) interacts with NADP(+); that stretch reads CDFK. 137–144 contributes to the substrate binding site; that stretch reads TCIATACM. NADP(+) contacts are provided by residues 195-198, Tyr-213, and 260-261; these read SPKN and LE. 281–285 provides a ligand contact to substrate; sequence GQMIL. 350–351 serves as a coordination point for NADP(+); it reads VA.

This sequence belongs to the zinc-containing alcohol dehydrogenase family. As to quaternary structure, monomer.

It functions in the pathway secondary metabolite biosynthesis. Functionally, trans-enoyl reductase; part of the gene cluster that mediates the biosynthesis of a tyrosine-derived cytochalasan acting as a fungal signal recognized by resistant rice plants and leads to avirulence in Pi33 resistant rice cultivars. The first step in the pathway is catalyzed by the hybrid PKS-NRPS ACE1, assisted by the enoyl reductase RAP1, that are responsible for fusion of the tyrosine precursor and the polyketide backbone. The polyketide synthase module (PKS) of ACE1 is responsible for the synthesis of the polyketide backbone and the downstream nonribosomal peptide synthetase (NRPS) amidates the carboxyl end of the polyketide with the tyrosine precursor. Because ACE1 lacks a designated enoylreductase (ER) domain, the required activity is provided the enoyl reductase RAP1. Reduction by the hydrolyase ORFZ, followed by dehydration and intra-molecular Diels-Alder cyclization by the Diels-Alderase ORF3 then yield the required isoindolone-fused macrocycle. A number of oxidative steps catalyzed by the tailoring enzymes identified within the cluster, including cytochrome P450 monooxygenases CYP1 to CYP4, the FAD-linked oxidoreductase OXR2 and the short-chain dehydrogenase/reductase OXR1, are further required to afford the final cytochalasans that confer avirulence and which have still to be identified. The monooxygenase CYP1 has been shown to be a site-selective C-18 hydroxylase whereas the function of CYP3 is the site-selective epoxidation of the C-6/C-7 olefin that is present in some intermediate compounds. Finally, SYN2 and RAP2 are not required for avirulence in Pi33 resistant rice cultivars. The chain is Trans-enoyl reductase RAP1 from Pyricularia oryzae (strain 70-15 / ATCC MYA-4617 / FGSC 8958) (Rice blast fungus).